A 955-amino-acid polypeptide reads, in one-letter code: GPI inositol-deacylase B (955 aa).

A glycan (N-linked (GlcNAc...) asparagine) is linked at N7. Residues 8 to 28 traverse the membrane as a helical segment; sequence ASVALWTVFTILTIWISFALH. S180 is a catalytic residue. The N-linked (GlcNAc...) asparagine glycan is linked to N431. 4 helical membrane passes run 489-509, 600-620, 643-663, and 703-723; these read IAFP…SGGV, LLFS…FWRY, YLSW…FEFI, and PIGV…VVVV. A glycan (N-linked (GlcNAc...) asparagine) is linked at N753. 3 helical membrane-spanning segments follow: residues 772 to 792, 840 to 860, and 870 to 890; these read VIIA…LAFA, TMSV…AVWV, and IFSS…IENL. N-linked (GlcNAc...) asparagine glycosylation occurs at N914. A helical membrane pass occupies residues 919–939; that stretch reads GMMHAFMIHHWFNLLAGWLLI. N945 carries an N-linked (GlcNAc...) asparagine glycan.

The protein belongs to the GPI inositol-deacylase family.

Its subcellular location is the endoplasmic reticulum membrane. In terms of biological role, involved in inositol deacylation of GPI-anchored proteins which plays important roles in the quality control and ER-associated degradation of GPI-anchored proteins. The sequence is that of GPI inositol-deacylase B (BST1B) from Yarrowia lipolytica (strain CLIB 122 / E 150) (Yeast).